The primary structure comprises 185 residues: Elongation factor P (185 aa).

Belongs to the elongation factor P family.

Its subcellular location is the cytoplasm. Its pathway is protein biosynthesis; polypeptide chain elongation. In terms of biological role, involved in peptide bond synthesis. Stimulates efficient translation and peptide-bond synthesis on native or reconstituted 70S ribosomes in vitro. Probably functions indirectly by altering the affinity of the ribosome for aminoacyl-tRNA, thus increasing their reactivity as acceptors for peptidyl transferase. The chain is Elongation factor P from Bacillus cereus (strain G9842).